The chain runs to 388 residues: Formate-dependent phosphoribosylglycinamide formyltransferase (388 aa).

Residues 15-16 (EL) and Glu-75 each bind N(1)-(5-phospho-beta-D-ribosyl)glycinamide. Residues Arg-107, Lys-148, 153-158 (SSGKGQ), 188-191 (EEFL), and Glu-196 each bind ATP. The ATP-grasp domain occupies 112–302 (DLAAGELALR…EFELHLRAVL (191 aa)). Glu-261 and Glu-273 together coordinate Mg(2+). N(1)-(5-phospho-beta-D-ribosyl)glycinamide-binding positions include Asp-280, Lys-350, and 357–358 (RR).

It belongs to the PurK/PurT family. Homodimer.

The catalysed reaction is N(1)-(5-phospho-beta-D-ribosyl)glycinamide + formate + ATP = N(2)-formyl-N(1)-(5-phospho-beta-D-ribosyl)glycinamide + ADP + phosphate + H(+). Its pathway is purine metabolism; IMP biosynthesis via de novo pathway; N(2)-formyl-N(1)-(5-phospho-D-ribosyl)glycinamide from N(1)-(5-phospho-D-ribosyl)glycinamide (formate route): step 1/1. Functionally, involved in the de novo purine biosynthesis. Catalyzes the transfer of formate to 5-phospho-ribosyl-glycinamide (GAR), producing 5-phospho-ribosyl-N-formylglycinamide (FGAR). Formate is provided by PurU via hydrolysis of 10-formyl-tetrahydrofolate. This chain is Formate-dependent phosphoribosylglycinamide formyltransferase, found in Parasynechococcus marenigrum (strain WH8102).